Reading from the N-terminus, the 155-residue chain is Small ribosomal subunit protein eS19B (155 aa).

This sequence belongs to the eukaryotic ribosomal protein eS19 family.

The chain is Small ribosomal subunit protein eS19B (RpS19b) from Drosophila melanogaster (Fruit fly).